Consider the following 205-residue polypeptide: Protein N-terminal glutamine amidohydrolase (205 aa).

Active-site residues include C20, H74, and D90.

The protein belongs to the NTAQ1 family. In terms of assembly, monomer.

The catalysed reaction is N-terminal L-glutaminyl-[protein] + H2O = N-terminal L-glutamyl-[protein] + NH4(+). Functionally, mediates the side-chain deamidation of N-terminal glutamine residues to glutamate, an important step in N-end rule pathway of protein degradation. Conversion of the resulting N-terminal glutamine to glutamate renders the protein susceptible to arginylation, polyubiquitination and degradation as specified by the N-end rule. Does not act on substrates with internal or C-terminal glutamine and does not act on non-glutamine residues in any position. In Drosophila willistoni (Fruit fly), this protein is Protein N-terminal glutamine amidohydrolase (tun).